The primary structure comprises 737 residues: Protein kinase C epsilon type (737 aa).

Positions 1–117 (MVVFNGLLKI…NGSRHFEDWI (117 aa)) constitute a C2 domain. S62 carries the phosphoserine modification. The Phorbol-ester/DAG-type 1 zinc finger occupies 169 to 220 (GHKFMATYLRQPTYCSHCRDFIWGVIGKQGYQCQVCTCVVHKRCHELIITKC). The Interaction with actin motif lies at 223–228 (LKKQET). T228 is subject to Phosphothreonine. S234 carries the post-translational modification Phosphoserine. The Phorbol-ester/DAG-type 2 zinc-finger motif lies at 242 to 292 (PHKFGIHNYKVPTFCDHCGSLLWGLLRQGLQCKVCKMNVHRRCETNVAPNC). T309 bears the Phosphothreonine mark. The segment at 310-356 (PDKITNSGQRRKKLAAGAESPQPASGNSPSEDDRSKSAPTSPCDQEL) is disordered. Phosphoserine occurs at positions 316, 329, 337, and 346. Residue T349 is modified to Phosphothreonine. S350 bears the Phosphoserine; by MAPK11 and MAPK14 mark. Phosphoserine occurs at positions 368 and 388. Positions 369–398 (FDNRGEEHRASSSTDGQLASPGENGEVRQG) are disordered. One can recognise a Protein kinase domain in the interval 408 to 668 (FNFIKVLGKG…EDAIKQHPFF (261 aa)). ATP-binding positions include 414–422 (LGKGSFGKV) and K437. The Proton acceptor role is filled by D532. Position 566 is a phosphothreonine; by PDPK1 (T566). The AGC-kinase C-terminal domain maps to 669 to 737 (KEIDWVLLEQ…FSYFGEDLMP (69 aa)). Phosphothreonine occurs at positions 703 and 710. S729 is modified (phosphoserine).

This sequence belongs to the protein kinase superfamily. AGC Ser/Thr protein kinase family. PKC subfamily. In terms of assembly, forms a ternary complex with TRIM63 and RACK1/GN2BL1. Can form a complex with PDLIM5 and N-type calcium channel. Interacts with COPB1. Interacts with DGKQ. Interacts with STAT3. Interacts with YWHAB. Interacts with HSP90AB1; promotes functional activation in a heat shock-dependent manner. Interacts (via phorbol-ester/DAG-type 2 domain) with PRPH and VIM. Interacts with NLRP5/MATER. Phosphorylation on Thr-566 by PDPK1 triggers autophosphorylation on Ser-729. Phosphorylation in the hinge domain at Ser-350 by MAPK11 or MAPK14, Ser-346 by GSK3B and Ser-368 by autophosphorylation is required for interaction with YWHAB. In response to growth factors, phosphorylated at Thr-703 and Ser-729 by the mTORC2 complex, promoting autophosphorylation and activation of PRKCE.

It is found in the cytoplasm. It localises to the cytoskeleton. The protein resides in the cell membrane. The protein localises to the perinuclear region. Its subcellular location is the nucleus. It catalyses the reaction L-seryl-[protein] + ATP = O-phospho-L-seryl-[protein] + ADP + H(+). The catalysed reaction is L-threonyl-[protein] + ATP = O-phospho-L-threonyl-[protein] + ADP + H(+). Novel PKCs (PRKCD, PRKCE, PRKCH and PRKCQ) are calcium-insensitive, but activated by diacylglycerol (DAG) and phosphatidylserine. Three specific sites; Thr-566 (activation loop of the kinase domain), Thr-710 (turn motif) and Ser-729 (hydrophobic region), need to be phosphorylated for its full activation. Calcium-independent, phospholipid- and diacylglycerol (DAG)-dependent serine/threonine-protein kinase that plays essential roles in the regulation of multiple cellular processes linked to cytoskeletal proteins, such as cell adhesion, motility, migration and cell cycle, functions in neuron growth and ion channel regulation, and is involved in immune response, cancer cell invasion and regulation of apoptosis. Mediates cell adhesion to the extracellular matrix via integrin-dependent signaling, by mediating angiotensin-2-induced activation of integrin beta-1 (ITGB1) in cardiac fibroblasts. Phosphorylates MARCKS, which phosphorylates and activates PTK2/FAK, leading to the spread of cardiomyocytes. Involved in the control of the directional transport of ITGB1 in mesenchymal cells by phosphorylating vimentin (VIM), an intermediate filament (IF) protein. In epithelial cells, associates with and phosphorylates keratin-8 (KRT8), which induces targeting of desmoplakin at desmosomes and regulates cell-cell contact. Phosphorylates IQGAP1, which binds to CDC42, mediating epithelial cell-cell detachment prior to migration. During cytokinesis, forms a complex with YWHAB, which is crucial for daughter cell separation, and facilitates abscission by a mechanism which may implicate the regulation of RHOA. In cardiac myocytes, regulates myofilament function and excitation coupling at the Z-lines, where it is indirectly associated with F-actin via interaction with COPB1. During endothelin-induced cardiomyocyte hypertrophy, mediates activation of PTK2/FAK, which is critical for cardiomyocyte survival and regulation of sarcomere length. Plays a role in the pathogenesis of dilated cardiomyopathy via persistent phosphorylation of troponin I (TNNI3). Involved in nerve growth factor (NFG)-induced neurite outgrowth and neuron morphological change independently of its kinase activity, by inhibition of RHOA pathway, activation of CDC42 and cytoskeletal rearrangement. May be involved in presynaptic facilitation by mediating phorbol ester-induced synaptic potentiation. Phosphorylates gamma-aminobutyric acid receptor subunit gamma-2 (GABRG2), which reduces the response of GABA receptors to ethanol and benzodiazepines and may mediate acute tolerance to the intoxicating effects of ethanol. Upon PMA treatment, phosphorylates the capsaicin- and heat-activated cation channel TRPV1, which is required for bradykinin-induced sensitization of the heat response in nociceptive neurons. Is able to form a complex with PDLIM5 and N-type calcium channel, and may enhance channel activities and potentiates fast synaptic transmission by phosphorylating the pore-forming alpha subunit CACNA1B (CaV2.2). Downstream of TLR4, plays an important role in the lipopolysaccharide (LPS)-induced immune response by phosphorylating and activating TICAM2/TRAM, which in turn activates the transcription factor IRF3 and subsequent cytokines production. In differentiating erythroid progenitors, is regulated by EPO and controls the protection against the TNFSF10/TRAIL-mediated apoptosis, via BCL2. May be involved in the regulation of the insulin-induced phosphorylation and activation of AKT1. Phosphorylates NLRP5/MATER and may thereby modulate AKT pathway activation in cumulus cells. Phosphorylates and activates LRRK1, which phosphorylates RAB proteins involved in intracellular trafficking. The protein is Protein kinase C epsilon type (Prkce) of Rattus norvegicus (Rat).